The primary structure comprises 338 residues: Decarboxylase macB (338 aa).

Zn(2+) is bound by residues histidine 7, histidine 9, histidine 159, and aspartate 283.

This sequence belongs to the metallo-dependent hydrolases superfamily. ACMSD family.

The enzyme catalyses 6-methylsalicylate + H(+) = 3-methylphenol + CO2. The protein operates within secondary metabolite biosynthesis; terpenoid biosynthesis. Decarboxylase; part of the gene cluster that mediates the biosynthesis of macrophorins, isoprenoid epoxycyclohexenones containing cyclized drimane moieties. The first step of the pathway is the synthesis of 6-methylsalicylic acid (6-MSA) by the polyketide synthase macA. 6-MSA is then converted to m-cresol by the decarboxylase macB. The cytochrome P450 monooxygenase macC then catalyzes the oxidation of m-cresol to toluquinol. Epoxidation of toluquinol is then performed by the short chain dehydrogenase macD, with the help of macE, and a further prenylation by macG leads to 7-deacetoxyyanuthone A. The next step is the hydroxylation of C-22 of 7-deacetoxyyanuthone A by the cytochrome P450 monooxygenase macH to yield 22-deacetylyanuthone A. O-Mevalon transferase macI then attaches mevalon to the hydroxyl group of 22-deacetylyanuthone A to produce yanuthone E. The terpene cyclase macJ catalyzes the cyclization of 22-deacetylyanuthone A to macrophorin A. MacJ is also able to catalyze cyclization of yanuthone E and 7-deacetoxyyanuthone A to their corresponding macrophorins. The macJ products can be further modified by macH and macJ, as well as by the FAD-dependent monooxygenase macF, to produce additional macrophorins, including 4'-oxomacrophorin A, 4'-oxomacrophorin D and 4'-oxomacrophorin E. The protein is Decarboxylase macB of Penicillium terrestre.